Here is a 532-residue protein sequence, read N- to C-terminus: Protein DETOXIFICATION 51 (532 aa).

Helical transmembrane passes span 65-85, 98-118, 142-162, 176-196, 208-228, 238-258, 290-310, 316-336, 358-378, 395-415, 439-459, and 461-481; these read FPIAVTALVLYLRSAVSMFFL, LAIAFANITGYSVLSGLALGM, VVFLLVCCVPISVLWFNVGKI, AQTYLIFSLPDLLTNTLLHPI, PVTLASLSGAVFHLPANLFLV, VAVASSITNIFVVAFLVCYVW, VSVCLEWWWYEIMIVLCGLLV, VAAMGVLIQTTSFLYVFPSSL, LTATVAIVFAAVTGIIAAAFA, ILQLTAAALPILGLCEIGNCP, AFYLVGMPVAVGLGFWAGIGF, and GLWVGLLAAQISCAGLMMYVV.

This sequence belongs to the multi antimicrobial extrusion (MATE) (TC 2.A.66.1) family. Expressed in the meristematic regions. Mainly detected in tissues where cells were actively dividing, such as leaf primordia and young leaves, the junction between lateral root and the primary root, root cap, hydathodes, the junction between secondary inflorescence and the main inflorescence, young stamen and young siliques. Highly expressed at the junction between the hypocotyl and the root, and at the marginal areas of cotyledons and true leaves, coinciding with the locations of the hydathode. Also highly expressed at the basal regions of the newly emerged lateral roots. In the floral organs, mostly expressed at the style of the pistil.

It localises to the endosome membrane. Its subcellular location is the late endosome membrane. Its function is as follows. Functions as a multidrug and toxin extrusion transporter that negatively regulates plant disease resistance. Plays an important role in maintaining normal plant architecture, possibly by regulating local auxin biosynthesis. May act as a negative regulator of hypocotyl cell elongation in the light. The chain is Protein DETOXIFICATION 51 from Arabidopsis thaliana (Mouse-ear cress).